The sequence spans 83 residues: Cytochrome c oxidase subunit 7A2, mitochondrial (83 aa).

The N-terminal 23 residues, 1–23 (MLRNVLALRQIAQRTISTTSRRH), are a transit peptide targeting the mitochondrion. The Mitochondrial matrix segment spans residues 24–48 (FENKVPEKQKLFQEDNGMPVHLKGG). An N6-acetyllysine modification is found at lysine 33. A helical membrane pass occupies residues 49 to 77 (TSDALLYRATMLLTVGGTAYAIYMLAMAA). Residues 78–83 (FPKKQN) lie on the Mitochondrial intermembrane side of the membrane.

It belongs to the cytochrome c oxidase VIIa family. Component of the cytochrome c oxidase (complex IV, CIV), a multisubunit enzyme composed of 14 subunits. The complex is composed of a catalytic core of 3 subunits MT-CO1, MT-CO2 and MT-CO3, encoded in the mitochondrial DNA, and 11 supernumerary subunits COX4I, COX5A, COX5B, COX6A, COX6B, COX6C, COX7A, COX7B, COX7C, COX8 and NDUFA4, which are encoded in the nuclear genome. The complex exists as a monomer or a dimer and forms supercomplexes (SCs) in the inner mitochondrial membrane with NADH-ubiquinone oxidoreductase (complex I, CI) and ubiquinol-cytochrome c oxidoreductase (cytochrome b-c1 complex, complex III, CIII), resulting in different assemblies (supercomplex SCI(1)III(2)IV(1) and megacomplex MCI(2)III(2)IV(2)). Interacts with PET100.

It is found in the mitochondrion inner membrane. The protein operates within energy metabolism; oxidative phosphorylation. Component of the cytochrome c oxidase, the last enzyme in the mitochondrial electron transport chain which drives oxidative phosphorylation. The respiratory chain contains 3 multisubunit complexes succinate dehydrogenase (complex II, CII), ubiquinol-cytochrome c oxidoreductase (cytochrome b-c1 complex, complex III, CIII) and cytochrome c oxidase (complex IV, CIV), that cooperate to transfer electrons derived from NADH and succinate to molecular oxygen, creating an electrochemical gradient over the inner membrane that drives transmembrane transport and the ATP synthase. Cytochrome c oxidase is the component of the respiratory chain that catalyzes the reduction of oxygen to water. Electrons originating from reduced cytochrome c in the intermembrane space (IMS) are transferred via the dinuclear copper A center (CU(A)) of subunit 2 and heme A of subunit 1 to the active site in subunit 1, a binuclear center (BNC) formed by heme A3 and copper B (CU(B)). The BNC reduces molecular oxygen to 2 water molecules using 4 electrons from cytochrome c in the IMS and 4 protons from the mitochondrial matrix. The sequence is that of Cytochrome c oxidase subunit 7A2, mitochondrial (Cox7a2) from Rattus norvegicus (Rat).